The following is a 49-amino-acid chain: Large ribosomal subunit protein bL33 (49 aa).

The protein belongs to the bacterial ribosomal protein bL33 family.

This Streptococcus pyogenes serotype M18 (strain MGAS8232) protein is Large ribosomal subunit protein bL33.